The sequence spans 24 residues: Humanin-like 6 (24 aa).

It belongs to the humanin family. Expressed in skeletal muscle and testis.

Its subcellular location is the secreted. It localises to the cytoplasm. Plays a role as a neuroprotective and antiapoptotic factor. The protein is Humanin-like 6 of Homo sapiens (Human).